Here is a 241-residue protein sequence, read N- to C-terminus: Uridylate kinase (241 aa).

15-18 provides a ligand contact to ATP; that stretch reads KMSG. G57 is a UMP binding site. Positions 58 and 62 each coordinate ATP. UMP-binding positions include D77 and 138–145; that span reads TGNPFFTT. 3 residues coordinate ATP: T165, Y171, and D174.

Belongs to the UMP kinase family. Homohexamer.

The protein resides in the cytoplasm. It catalyses the reaction UMP + ATP = UDP + ADP. Its pathway is pyrimidine metabolism; CTP biosynthesis via de novo pathway; UDP from UMP (UMPK route): step 1/1. Inhibited by UTP. Catalyzes the reversible phosphorylation of UMP to UDP. In Dichelobacter nodosus (strain VCS1703A), this protein is Uridylate kinase.